The chain runs to 334 residues: Endoplasmic reticulum junction formation protein lunapark (334 aa).

Residues methionine 1–lysine 40 are Cytoplasmic-facing. The stretch at aspartate 12 to leucine 42 forms a coiled coil. Residues isoleucine 41–alanine 61 form a helical membrane-spanning segment. The Lumenal segment spans residues serine 62–arginine 78. The helical transmembrane segment at isoleucine 79 to phenylalanine 99 threads the bilayer. Positions phenylalanine 99 to serine 127 form a coiled coil. At cysteine 100–lysine 334 the chain is on the cytoplasmic side. The C4-type; plays a role in ER morphology zinc finger occupies cysteine 201–cysteine 227. The segment at lysine 237 to valine 315 is disordered. Residues leucine 239 to proline 252 show a composition bias toward polar residues. Residues serine 253–glycine 270 show a composition bias toward low complexity. Residues isoleucine 273–serine 283 are compositionally biased toward polar residues. The residue at position 284 (serine 284) is a Phosphoserine. Residues alanine 297 to valine 315 are compositionally biased toward low complexity.

This sequence belongs to the lunapark family.

The protein resides in the endoplasmic reticulum membrane. It is found in the golgi apparatus membrane. Plays a role in tubular endoplasmic reticulum network formation and maintenance. This is Endoplasmic reticulum junction formation protein lunapark (lnp1) from Schizosaccharomyces pombe (strain 972 / ATCC 24843) (Fission yeast).